The primary structure comprises 132 residues: MVNDTVANMITSIRNANVIEATTVRIPATNTTKDVGKILLQEGFITNLREHKENTRSFLILTLKYRGRKKKPYITNLKRISKPGLRIYSNHREIPKVLGGMGIVILSTSSGIVTDREARQKQIGGEILCYVW.

This sequence belongs to the universal ribosomal protein uS8 family. As to quaternary structure, part of the 30S ribosomal subunit.

It localises to the plastid. The protein localises to the chloroplast. One of the primary rRNA binding proteins, it binds directly to 16S rRNA central domain where it helps coordinate assembly of the platform of the 30S subunit. The protein is Small ribosomal subunit protein uS8c (rps8) of Angiopteris evecta (Mule's foot fern).